The following is a 407-amino-acid chain: Putative membrane protein 047R (407 aa).

The disordered stretch occupies residues 265–337 (INCVFKPDPP…PPKPTPPPPI (73 aa)). Positions 271 to 337 (PDPPPQPKPQ…PPKPTPPPPI (67 aa)) are enriched in pro residues. A run of 2 helical transmembrane segments spans residues 355 to 372 (NWIM…VIYP) and 385 to 403 (NAAI…QSYV).

It belongs to the IIV-6 337L family.

The protein localises to the virion membrane. This Aedes vexans (Inland floodwater mosquito) protein is Putative membrane protein 047R.